We begin with the raw amino-acid sequence, 412 residues long: Argininosuccinate synthase (412 aa).

Residues A15–S23 and A42 each bind ATP. L-citrulline is bound by residues Y93 and S98. G123 contributes to the ATP binding site. The L-aspartate site is built by T125, N129, and D130. An L-citrulline-binding site is contributed by N129. L-citrulline-binding residues include R133, S185, S194, E270, and Y282.

This sequence belongs to the argininosuccinate synthase family. Type 1 subfamily. As to quaternary structure, homotetramer.

It localises to the cytoplasm. The catalysed reaction is L-citrulline + L-aspartate + ATP = 2-(N(omega)-L-arginino)succinate + AMP + diphosphate + H(+). It functions in the pathway amino-acid biosynthesis; L-arginine biosynthesis; L-arginine from L-ornithine and carbamoyl phosphate: step 2/3. This Psychrobacter cryohalolentis (strain ATCC BAA-1226 / DSM 17306 / VKM B-2378 / K5) protein is Argininosuccinate synthase.